The sequence spans 182 residues: Heat shock protein beta-2 (182 aa).

The region spanning 55–163 is the sHSP domain; sequence PAGEGSRAGA…DTEVNEVYIS (109 aa).

The protein belongs to the small heat shock protein (HSP20) family. Interacts with DMPK; may enhance its kinase activity. Expressed preferentially in skeletal muscle and heart but not in the lens.

It is found in the cytoplasm. It localises to the nucleus. Its function is as follows. May regulate the kinase DMPK. The chain is Heat shock protein beta-2 (HSPB2) from Homo sapiens (Human).